Here is a 574-residue protein sequence, read N- to C-terminus: Tyrosinase (574 aa).

Residues His67, His95, His104, His275, His279, and His304 each coordinate Cu cation. Positions 93–95 (CTH) form a cross-link, 2'-(S-cysteinyl)-histidine (Cys-His).

This sequence belongs to the tyrosinase family. Requires Cu(2+) as cofactor.

The enzyme catalyses 2 L-dopa + O2 = 2 L-dopaquinone + 2 H2O. It catalyses the reaction L-tyrosine + O2 = L-dopaquinone + H2O. Its function is as follows. This is a copper-containing oxidase that functions in the formation of pigments such as melanins and other polyphenolic compounds. The protein is Tyrosinase (TYR) of Podospora anserina (Pleurage anserina).